The following is a 258-amino-acid chain: UPF0246 protein Shew_1093 (258 aa).

The protein belongs to the UPF0246 family.

The chain is UPF0246 protein Shew_1093 from Shewanella loihica (strain ATCC BAA-1088 / PV-4).